Consider the following 119-residue polypeptide: UPF0145 protein Ta0182 (119 aa).

The protein belongs to the UPF0145 family.

This Thermoplasma acidophilum (strain ATCC 25905 / DSM 1728 / JCM 9062 / NBRC 15155 / AMRC-C165) protein is UPF0145 protein Ta0182.